A 378-amino-acid chain; its full sequence is Alanine racemase (378 aa).

Lysine 40 functions as the Proton acceptor; specific for D-alanine in the catalytic mechanism. Lysine 40 carries the N6-(pyridoxal phosphate)lysine modification. Arginine 140 provides a ligand contact to substrate. Tyrosine 270 functions as the Proton acceptor; specific for L-alanine in the catalytic mechanism. Methionine 317 serves as a coordination point for substrate.

The protein belongs to the alanine racemase family. The cofactor is pyridoxal 5'-phosphate.

The catalysed reaction is L-alanine = D-alanine. The protein operates within amino-acid biosynthesis; D-alanine biosynthesis; D-alanine from L-alanine: step 1/1. In terms of biological role, catalyzes the interconversion of L-alanine and D-alanine. May also act on other amino acids. The sequence is that of Alanine racemase (alr) from Lacticaseibacillus casei (strain BL23) (Lactobacillus casei).